The sequence spans 57 residues: Protein GnsB (57 aa).

This sequence belongs to the gns family.

Its function is as follows. Overexpression increases levels of unsaturated fatty acids and suppresses both the temperature-sensitive fabA6 mutation and cold-sensitive secG null mutation. The protein is Protein GnsB (gnsB) of Escherichia coli (strain K12).